The primary structure comprises 59 residues: Large ribosomal subunit protein bL32B (59 aa).

Belongs to the bacterial ribosomal protein bL32 family.

In Enterococcus faecalis (strain ATCC 700802 / V583), this protein is Large ribosomal subunit protein bL32B (rpmF2).